We begin with the raw amino-acid sequence, 361 residues long: SSRTVLSNISNIQRRPQVVGKIKKEDGVALEEKAPLNKGLGRMVSQSNLISDVQLKTTKIIPAYQDIADVEVPINAMINSFTELEVDDIDLEDLGNPTLCAEYLKDIYKYMNKLERRLEPSDYMAHQAEINFKMRSILVDWLIQVQSRFNLLQETLYLTIYIIDRYLSKQNVKRAELQLEGVTAMLIASKYEEMYAPEIGDFVYITDNAYSKEKIRQMEQKMLKTCEYDFSNPLCLHFLRRNSKAGAVDAQKHTLAKYLMELTLVEYEFITKLPSEIAAAALYLALKLIDDSNWTPTLAHYSGYTEDEILSTVSKLSILTLSMDNSKYQAVKNKYSASKFLRISLIPQLKGHILSKFAERN.

This sequence belongs to the cyclin family. Cyclin AB subfamily.

In terms of biological role, essential for the control of the cell cycle at the G2/M (mitosis) transition. Interacts with the CDC2 protein kinase to form MPF. G2/M cyclins accumulate steadily during G2 and are abruptly destroyed at mitosis. This is G2/mitotic-specific cyclin-B from Hydra vulgaris (Hydra).